Here is an 88-residue protein sequence, read N- to C-terminus: Mitochondrial import inner membrane translocase subunit Tim10 (88 aa).

The short motif at 25–49 (CSAKCISKYNEGDLNVGESVCAERC) is the Twin CX3C motif element. 2 disulfides stabilise this stretch: Cys-25/Cys-49 and Cys-29/Cys-45. The interval 63–88 (KMSGTQPGQEVPQEAPAAAPEKKGWF) is disordered. The span at 68–81 (QPGQEVPQEAPAAA) shows a compositional bias: low complexity.

Belongs to the small Tim family. In terms of assembly, heterohexamer; composed of 3 copies of timm9 and 3 copies of timm10, named soluble 70 kDa complex. Associates directly with the TIM22 complex, whose core is composed of timm22. Interacts with the transmembrane regions of multi-pass transmembrane proteins in transit.

The protein resides in the mitochondrion inner membrane. Its function is as follows. Component of the TIM22 complex, a complex that mediates the import and insertion of multi-pass transmembrane proteins into the mitochondrial inner membrane. The TIM22 complex forms a twin-pore translocase that uses the membrane potential as external driving force. The chain is Mitochondrial import inner membrane translocase subunit Tim10 (timm10) from Dictyostelium discoideum (Social amoeba).